Here is a 78-residue protein sequence, read N- to C-terminus: Small ribosomal subunit protein uS17 (78 aa).

This sequence belongs to the universal ribosomal protein uS17 family. As to quaternary structure, part of the 30S ribosomal subunit.

One of the primary rRNA binding proteins, it binds specifically to the 5'-end of 16S ribosomal RNA. This chain is Small ribosomal subunit protein uS17, found in Allorhizobium ampelinum (strain ATCC BAA-846 / DSM 112012 / S4) (Agrobacterium vitis (strain S4)).